Consider the following 487-residue polypeptide: Calcium-binding tyrosine phosphorylation-regulated protein (487 aa).

Residues 12–49 (YGLKTLLEGISRAVLKTNPSDINQFAAAYFQELTMYRG) enclose the RIIa domain. 2 stretches are compositionally biased toward basic and acidic residues: residues 78–91 (KKLE…KTSV) and 101–117 (KSTD…EYSD). Disordered stretches follow at residues 78–163 (KKLE…AVSP), 243–271 (VDLG…QEPP), and 420–487 (IVSD…ATAE). The segment covering 140–152 (SSSKPATPKATTP) has biased composition (low complexity). Composition is skewed to polar residues over residues 420 to 436 (IVSD…NSVP) and 455 to 464 (SGTSVKSSSG). The span at 478–487 (IEPEGEATAE) shows a compositional bias: acidic residues.

In terms of assembly, interacts with FSCB. In terms of processing, phosphorylated on tyrosine residues during in vitro capacitation. Dephosphorylation affects its ability to bind calcium.

Its subcellular location is the cytoplasm. The protein resides in the cytoskeleton. The protein localises to the cell projection. It localises to the cilium. It is found in the flagellum. May function as a regulator of both motility- and head-associated functions such as capacitation and the acrosome reaction. May bind calcium in vitro. This Macaca fascicularis (Crab-eating macaque) protein is Calcium-binding tyrosine phosphorylation-regulated protein (CABYR).